A 274-amino-acid chain; its full sequence is Bis(5'-nucleosyl)-tetraphosphatase, symmetrical (274 aa).

It belongs to the Ap4A hydrolase family.

The catalysed reaction is P(1),P(4)-bis(5'-adenosyl) tetraphosphate + H2O = 2 ADP + 2 H(+). In terms of biological role, hydrolyzes diadenosine 5',5'''-P1,P4-tetraphosphate to yield ADP. In Shewanella putrefaciens (strain CN-32 / ATCC BAA-453), this protein is Bis(5'-nucleosyl)-tetraphosphatase, symmetrical.